The sequence spans 303 residues: RING finger protein 148 (303 aa).

The first 34 residues, 1–34 (MSLLRITSSAHSSASSRLWRLGIFLLLSLPDSKG), serve as a signal peptide directing secretion. Asn-43 is a glycosylation site (N-linked (GlcNAc...) asparagine). Residues 65–167 (HSPLERVSGV…LKGMELLHLI (103 aa)) enclose the PA domain. Residues 186 to 208 (WLSHYIMSLFTFLTATVAYLFLY) traverse the membrane as a helical segment. Residues 256-297 (CVVCFDIYKPQDVVRILTCKHIFHKACIDPWLLAHRTCPMCK) form an RING-type; atypical zinc finger.

It is found in the membrane. In Bos taurus (Bovine), this protein is RING finger protein 148 (RNF148).